Consider the following 436-residue polypeptide: MTVYHFVGIKGTGMSSLAQILHDMKHTVQGSDYEKRFFTQTALEKRSISILPFDKSNVKEGQVIIAGNAFPDTHEEIVAAKELNIPVHRYHHFLGDLMNQYTSVAVTGAHGKTSTTGLLAHVMQGAHPTSYLIGDGTGHGVENSKYFVFEACEYRRHFLSYNPDYAIMTNIDFDHPDYFTDINDVFSAFQEMALQVKKGIIACGDDEELQKIQAKVPVIFYGFGEDNDFQARNIQKRTDGTIFDVFVRNTYYDTFKITGYGNHSVLNALAVIALCHYENVDVEAVKHQLTTFEGVKRRFNEKPMGEQVIIDDYAHHPTEINATIEAARQKHPEREIVVVFQPHTFSRTEKFLDEFAESLSKADQVYLCDIFGSARENKGELTIEDLQKRIDGAELITDTTTDVLKKHKNGVLIFMGAGDIQKFEAAYVKEVQVAEK.

An ATP-binding site is contributed by 108–114; the sequence is GAHGKTS.

It belongs to the MurCDEF family.

Its subcellular location is the cytoplasm. The catalysed reaction is UDP-N-acetyl-alpha-D-muramate + L-alanine + ATP = UDP-N-acetyl-alpha-D-muramoyl-L-alanine + ADP + phosphate + H(+). It functions in the pathway cell wall biogenesis; peptidoglycan biosynthesis. In terms of biological role, cell wall formation. This chain is UDP-N-acetylmuramate--L-alanine ligase, found in Bacillus cereus (strain Q1).